Reading from the N-terminus, the 341-residue chain is D-aspartate oxidase (341 aa).

D36, R37, T43, S44, M50, G307, I311, and S312 together coordinate FAD. Residues S339–L341 carry the Microbody targeting signal motif.

The protein belongs to the DAMOX/DASOX family. As to quaternary structure, tetramer. Interacts with PEX5; the interaction is direct and required for localization of DDO to the peroxisome. The cofactor is FAD. In terms of tissue distribution, expressed in liver and kidney (at protein level). In the brain, expressed in the frontal, temporal, and occipital lobes of the cortex, hippocampus, striatum, diencephalon, brainstem, cerebellum, spinal cord, plexus choroiderus and ependyma (at protein level). Also expressed in the lung, muscle, heart, spleen, small intestine and testis (at protein level).

It is found in the peroxisome matrix. Its subcellular location is the cytoplasm. The protein localises to the cytosol. It catalyses the reaction D-aspartate + O2 + H2O = oxaloacetate + H2O2 + NH4(+). It carries out the reaction D-glutamate + O2 + H2O = H2O2 + 2-oxoglutarate + NH4(+). Its activity is regulated as follows. Inhibited by aminooxyacetic acid, malonate, meso-tartrate and potassium bromide. In terms of biological role, selectively catalyzes the oxidative deamination of acidic amino acids. Suppresses the level of D-aspartate in the brain, an amino acid that can act as an agonist for glutamate receptors. Protects the organism from the toxicity of D-amino acids. May also function in the intestine. This Rattus norvegicus (Rat) protein is D-aspartate oxidase.